Here is a 675-residue protein sequence, read N- to C-terminus: UvrABC system protein B (675 aa).

Positions 30–417 constitute a Helicase ATP-binding domain; it reads SGIEQGNRNQ…SDQIVEQVVR (388 aa). 43–50 is a binding site for ATP; sequence GVTGSGKT. The Beta-hairpin signature appears at 96–119; that stretch reads YYDYYQPEAYVPSSDTFIEKDAAI. The Helicase C-terminal domain occupies 434–601; that stretch reads QVDDVLSEIN…AVRQKVKEID (168 aa). The region spanning 637-672 is the UVR domain; the sequence is AKHMSKLEKEMLKASKELQFEQAARLRDEILRLKAQ.

This sequence belongs to the UvrB family. Forms a heterotetramer with UvrA during the search for lesions. Interacts with UvrC in an incision complex.

The protein resides in the cytoplasm. In terms of biological role, the UvrABC repair system catalyzes the recognition and processing of DNA lesions. A damage recognition complex composed of 2 UvrA and 2 UvrB subunits scans DNA for abnormalities. Upon binding of the UvrA(2)B(2) complex to a putative damaged site, the DNA wraps around one UvrB monomer. DNA wrap is dependent on ATP binding by UvrB and probably causes local melting of the DNA helix, facilitating insertion of UvrB beta-hairpin between the DNA strands. Then UvrB probes one DNA strand for the presence of a lesion. If a lesion is found the UvrA subunits dissociate and the UvrB-DNA preincision complex is formed. This complex is subsequently bound by UvrC and the second UvrB is released. If no lesion is found, the DNA wraps around the other UvrB subunit that will check the other stand for damage. In Acinetobacter baylyi (strain ATCC 33305 / BD413 / ADP1), this protein is UvrABC system protein B.